The sequence spans 341 residues: S-adenosylmethionine:tRNA ribosyltransferase-isomerase (341 aa).

It belongs to the QueA family. As to quaternary structure, monomer.

It localises to the cytoplasm. It carries out the reaction 7-aminomethyl-7-carbaguanosine(34) in tRNA + S-adenosyl-L-methionine = epoxyqueuosine(34) in tRNA + adenine + L-methionine + 2 H(+). It functions in the pathway tRNA modification; tRNA-queuosine biosynthesis. Transfers and isomerizes the ribose moiety from AdoMet to the 7-aminomethyl group of 7-deazaguanine (preQ1-tRNA) to give epoxyqueuosine (oQ-tRNA). This is S-adenosylmethionine:tRNA ribosyltransferase-isomerase from Clostridium beijerinckii (strain ATCC 51743 / NCIMB 8052) (Clostridium acetobutylicum).